Here is a 325-residue protein sequence, read N- to C-terminus: MYQNFIGQNPMLNQFNTYSQQNPNFIPFHNNQLINNNVHVANNLNNFVQQHKQLQNQMPQFQNQFQNQSMNQSMNQSMNQQINRPMNQSMNQSMNQPMNKIGNKINKSHSENKSAKNIIEEMLKPQKIVKDNKDVESSYKNRNKQHENILKKGDFSEFKLTNAPYKVIIKDKINDYVGKNIDHFKKPEQLIVHKADPKIDANTDRFNAELELKESDLEKINETLKLEFKPERYNEHKKIFEHKEVYIRNMAYEAKTFDDNKQDYIEFYRQKQKEAEEGKKLYDDIIRNIIDEGIISKDELPTENLQNEKDVDIDKIIIDMNLDYQ.

Coiled coils occupy residues 38–69 (VHVA…QNQS) and 201–229 (ANTD…LEFK).

This is an uncharacterized protein from Acanthamoeba polyphaga (Amoeba).